A 237-amino-acid polypeptide reads, in one-letter code: Purine nucleoside phosphorylase DeoD-type (237 aa).

Histidine 4 contributes to the a purine D-ribonucleoside binding site. Phosphate contacts are provided by residues glycine 20, arginine 24, arginine 43, and 87–90; that span reads RVGT. Residues 179–181 and 203–204 contribute to the a purine D-ribonucleoside site; these read EME and SD. The Proton donor role is filled by aspartate 204.

It belongs to the PNP/UDP phosphorylase family. As to quaternary structure, homohexamer; trimer of homodimers.

It carries out the reaction a purine D-ribonucleoside + phosphate = a purine nucleobase + alpha-D-ribose 1-phosphate. It catalyses the reaction a purine 2'-deoxy-D-ribonucleoside + phosphate = a purine nucleobase + 2-deoxy-alpha-D-ribose 1-phosphate. Its function is as follows. Catalyzes the reversible phosphorolytic breakdown of the N-glycosidic bond in the beta-(deoxy)ribonucleoside molecules, with the formation of the corresponding free purine bases and pentose-1-phosphate. This chain is Purine nucleoside phosphorylase DeoD-type, found in Streptococcus gordonii (strain Challis / ATCC 35105 / BCRC 15272 / CH1 / DL1 / V288).